Reading from the N-terminus, the 163-residue chain is Photosystem II extrinsic protein V (163 aa).

The signal sequence occupies residues 1–26 (MFKKSSQLFSLVFFTIFSIFIGTASA). Residues Cys-63, Cys-66, His-67, and Met-130 each coordinate heme c.

It belongs to the cytochrome c family. PsbV subfamily. In terms of assembly, PSII is composed of 1 copy each of membrane proteins PsbA, PsbB, PsbC, PsbD, PsbE, PsbF, PsbH, PsbI, PsbJ, PsbK, PsbL, PsbM, PsbT, PsbY, PsbZ, Psb30/Ycf12, at least 3 peripheral proteins of the oxygen-evolving complex and a large number of cofactors. It forms dimeric complexes. Heme c is required as a cofactor.

It is found in the plastid. Its subcellular location is the chloroplast thylakoid membrane. Functionally, one of the extrinsic, lumenal subunits of photosystem II (PSII). PSII is a light-driven water plastoquinone oxidoreductase, using light energy to abstract electrons from H(2)O, generating a proton gradient subsequently used for ATP formation. The extrinsic proteins stabilize the structure of photosystem II oxygen-evolving complex (OEC), the ion environment of oxygen evolution and protect the OEC against heat-induced inactivation. In Phaeodactylum tricornutum (strain CCAP 1055/1), this protein is Photosystem II extrinsic protein V.